We begin with the raw amino-acid sequence, 436 residues long: GTPase Der (436 aa).

2 EngA-type G domains span residues 4-167 and 175-351; these read PTIA…PAQE and IKFS…ESQN. GTP contacts are provided by residues 10–17, 57–61, 119–122, 181–188, 229–233, and 294–297; these read GRPNVGKS, DTGGI, NKVD, DTAGM, and NKWD. Positions 352–436 constitute a KH-like domain; sequence TRIPSAVLND…PIHLIARKRK (85 aa).

Belongs to the TRAFAC class TrmE-Era-EngA-EngB-Septin-like GTPase superfamily. EngA (Der) GTPase family. Associates with the 50S ribosomal subunit.

Its function is as follows. GTPase that plays an essential role in the late steps of ribosome biogenesis. In Streptococcus suis (strain 98HAH33), this protein is GTPase Der.